The following is a 175-amino-acid chain: Transcriptional repressor NrdR (175 aa).

Residues 3–32 (CPYCSHPDTKVIDSRDVDDGVRRRRECVVC) fold into a zinc finger. An ATP-cone domain is found at 47–137 (LFVVKKDQRR…VYREFTDITQ (91 aa)).

It belongs to the NrdR family. Zn(2+) serves as cofactor.

In terms of biological role, negatively regulates transcription of bacterial ribonucleotide reductase nrd genes and operons by binding to NrdR-boxes. In Dehalococcoides mccartyi (strain ATCC BAA-2266 / KCTC 15142 / 195) (Dehalococcoides ethenogenes (strain 195)), this protein is Transcriptional repressor NrdR.